The sequence spans 371 residues: Cysteine proteinase 1 (371 aa).

A signal peptide spans 1–18 (MAHRVLLLLSLASAAAVA). The propeptide at 19–136 (AAVDAEDPLI…HEAPVLPTDG (118 aa)) is activation peptide. 2 cysteine pairs are disulfide-bonded: Cys158–Cys208 and Cys192–Cys241. Cys161 is a catalytic residue. An N-linked (GlcNAc...) asparagine glycan is attached at Asn254. A disulfide bond links Cys297 and Cys354. Residues His303 and Asn330 contribute to the active site.

This sequence belongs to the peptidase C1 family. In terms of tissue distribution, expressed during the late stages of seed ripening, in mature seeds and during germination.

Involved in the degradation of the storage protein zein. May play a role in proteolysis during emergencies. The protein is Cysteine proteinase 1 (CCP1) of Zea mays (Maize).